A 479-amino-acid polypeptide reads, in one-letter code: mRNA export factor ICP27 homolog (479 aa).

The segment covering 1–15 has biased composition (low complexity); that stretch reads MVPSQRLSRTSSISS. Disordered stretches follow at residues 1–77 and 91–210; these read MVPS…PSSV and KKWD…NKPW. The span at 35–44 shows a compositional bias: acidic residues; it reads TDCDLDPMEG. A nuclear export signal and interaction with host NXF1 region spans residues 61–146; sequence DEDPTPAHAI…TDESYGKRRH (86 aa). The nuclear localization signal stretch occupies residues 127-130; the sequence is KRRR. Positions 132–142 are enriched in basic and acidic residues; the sequence is EVHGCTDESYG. The nuclear localization signal stretch occupies residues 143–145; sequence KRR. 4 residues coordinate Zn(2+): cysteine 354, histidine 445, cysteine 449, and cysteine 454. A CHC2-type zinc finger spans residues 354–454; the sequence is CFLPNTRDYN…HTRDCRSASC (101 aa).

It belongs to the HHV-1 ICP27 protein family. In terms of assembly, interacts with host XPO1 and with the XPO1 export pathway components small GTPase RAN and nucleoporin NUP214. Interacts with host SPEN, OTT1 and OTT3. Interacts with host SRSF1, SRSF3, SRSF7 and SRPK1. Interacts with host DHX9; this interaction may have an inhibitory effect on virion production. Interacts (via N-terminus) with host NXF1; this interaction plays a role in mRNA export. Phosphorylated by cellular protein kinase CK2.

It localises to the host nucleus. Its subcellular location is the host cytoplasm. Functionally, promotes the nuclear export of a subset of early and late viral mRNAs by interacting with mRNAs and cellular export proteins. Additionally may prevent the establishment of cellular antiviral state, by acting as an alternative splicing factor for cellular RNAs such as STAT1, resulting in a STAT1 mRNA incapable of producing the STAT1alpha isoform. The polypeptide is mRNA export factor ICP27 homolog (Homo sapiens (Human)).